The sequence spans 192 residues: MTEYLLLLISTVLVNNFVLVKFLGLCPFMGVSSKLESAIGMSMATTFVLTLASILSYLVNQYLLLPFDLSYLRTMSFILVIAVVVQFTEMVVQKTSAALHRALGIYLPLITTNCAVLGVALLNVNEKHDFIQSAIYGFGAAVGFSLVLILFSAMRERLAAADVPLPFKGGAIAMITAGLMSLAFMGFTGLVK.

Transmembrane regions (helical) follow at residues 5–25 (LLLL…FLGL), 39–59 (IGMS…SYLV), 65–85 (LPFD…AVVV), 102–122 (ALGI…VALL), 134–154 (AIYG…FSAM), and 171–191 (AIAM…TGLV).

This sequence belongs to the NqrDE/RnfAE family. The complex is composed of six subunits: RnfA, RnfB, RnfC, RnfD, RnfE and RnfG.

It is found in the cell inner membrane. Functionally, part of a membrane-bound complex that couples electron transfer with translocation of ions across the membrane. This is Ion-translocating oxidoreductase complex subunit A from Shewanella putrefaciens (strain CN-32 / ATCC BAA-453).